The sequence spans 147 residues: Bis(5'-nucleosyl)-tetraphosphatase [asymmetrical] (147 aa).

Ala-2 carries the N-acetylalanine modification. Residues 2-139 form the Nudix hydrolase domain; it reads ALRACGLIIF…EMKATLQEGH (138 aa). Residues 43–64 carry the Nudix box motif; sequence GHVDPGENDLETALRETQEETG.

It belongs to the Nudix hydrolase family. A divalent metal cation serves as cofactor.

It carries out the reaction P(1),P(4)-bis(5'-guanosyl) tetraphosphate + H2O = GMP + GTP + 2 H(+). The catalysed reaction is a 5'-end CoA-ribonucleoside in mRNA + H2O = a 5'-end phospho-adenosine-phospho-ribonucleoside in mRNA + (R)-4'-phosphopantetheine + 2 H(+). The enzyme catalyses a 5'-end FAD-phospho-ribonucleoside in mRNA + H2O = a 5'-end phospho-adenosine-phospho-ribonucleoside in mRNA + FMN + 2 H(+). Its function is as follows. Catalyzes the asymmetric hydrolysis of diadenosine 5',5'''-P1,P4-tetraphosphate (Ap4A) to yield AMP and ATP. Exhibits decapping activity towards FAD-capped RNAs and dpCoA-capped RNAs in vitro. In Rattus norvegicus (Rat), this protein is Bis(5'-nucleosyl)-tetraphosphatase [asymmetrical] (Nudt2).